We begin with the raw amino-acid sequence, 286 residues long: Zinc finger protein ZAT5 (286 aa).

Disordered regions lie at residues 1-28 (MMMG…RSSS), 40-60 (STSS…EYNS), and 131-171 (GGHR…FKVS). The C2H2-type 1 zinc-finger motif lies at 115–137 (YECKTCNRTFSSFQALGGHRASH). Residues 154–171 (QPKSSASEEGQNSHFKVS) are compositionally biased toward polar residues. A C2H2-type 2 zinc finger spans residues 190–212 (HECSICGSEFTSGQALGGHMRRH).

In terms of tissue distribution, expressed in flowers and siliques.

It localises to the nucleus. In terms of biological role, probable transcription factor that may be involved in stress responses. This chain is Zinc finger protein ZAT5 (ZAT5), found in Arabidopsis thaliana (Mouse-ear cress).